Reading from the N-terminus, the 549-residue chain is ATP synthase subunit alpha (549 aa).

An ATP-binding site is contributed by 172-179 (GDRKTGKT). Residues 513-549 (SSTGESVVPDEHVEAMDEEDLGKESVKVKKPAPQKKK) form a disordered region. A compositionally biased stretch (basic residues) spans 540–549 (VKKPAPQKKK).

The protein belongs to the ATPase alpha/beta chains family. As to quaternary structure, F-type ATPases have 2 components, CF(1) - the catalytic core - and CF(0) - the membrane proton channel. CF(1) has five subunits: alpha(3), beta(3), gamma(1), delta(1), epsilon(1). CF(0) has three main subunits: a(1), b(2) and c(9-12). The alpha and beta chains form an alternating ring which encloses part of the gamma chain. CF(1) is attached to CF(0) by a central stalk formed by the gamma and epsilon chains, while a peripheral stalk is formed by the delta and b chains.

It is found in the cell membrane. The enzyme catalyses ATP + H2O + 4 H(+)(in) = ADP + phosphate + 5 H(+)(out). Produces ATP from ADP in the presence of a proton gradient across the membrane. The alpha chain is a regulatory subunit. The sequence is that of ATP synthase subunit alpha from Mycobacterium ulcerans (strain Agy99).